The sequence spans 466 residues: Glycylpeptide N-tetradecanoyltransferase (466 aa).

The interval 1 to 21 (MDNENNKNTKNSQQDSSFSEG) is disordered. Polar residues predominate over residues 8 to 19 (NTKNSQQDSSFS). At Ser17 the chain carries Phosphoserine. Tetradecanoyl-CoA contacts are provided by residues 51–54 (FKFW), 185–187 (LCI), and 193–197 (SKRLT). The Proton acceptor; via carboxylate role is filled by Ile466.

This sequence belongs to the NMT family. Monomer.

The protein resides in the cytoplasm. The catalysed reaction is N-terminal glycyl-[protein] + tetradecanoyl-CoA = N-tetradecanoylglycyl-[protein] + CoA + H(+). Its function is as follows. Adds a myristoyl group to the N-terminal glycine residue of certain cellular proteins. In Schizosaccharomyces pombe (strain 972 / ATCC 24843) (Fission yeast), this protein is Glycylpeptide N-tetradecanoyltransferase (nmt1).